Here is a 472-residue protein sequence, read N- to C-terminus: uncharacterized protein (472 aa).

The protein to B.subtilis YcdC.

This is an uncharacterized protein from Bacillus subtilis (strain 168).